We begin with the raw amino-acid sequence, 257 residues long: Pantothenate synthetase (257 aa).

Met-29–His-36 contributes to the ATP binding site. His-36 functions as the Proton donor in the catalytic mechanism. Residue Gln-60 participates in (R)-pantoate binding. Residue Gln-60 coordinates beta-alanine. Gly-145–Asp-148 is a binding site for ATP. Gln-151 lines the (R)-pantoate pocket. ATP is bound by residues Val-174 and Leu-182–Arg-185.

Belongs to the pantothenate synthetase family. Homodimer.

Its subcellular location is the cytoplasm. It catalyses the reaction (R)-pantoate + beta-alanine + ATP = (R)-pantothenate + AMP + diphosphate + H(+). It functions in the pathway cofactor biosynthesis; (R)-pantothenate biosynthesis; (R)-pantothenate from (R)-pantoate and beta-alanine: step 1/1. In terms of biological role, catalyzes the condensation of pantoate with beta-alanine in an ATP-dependent reaction via a pantoyl-adenylate intermediate. This Coxiella burnetii (strain Dugway 5J108-111) protein is Pantothenate synthetase.